The primary structure comprises 399 residues: Rhodopsin, G0-coupled (399 aa).

The Extracellular portion of the chain corresponds to 1 to 17; the sequence is MPFPLNRTDTALVISPS. N6 carries N-linked (GlcNAc...) asparagine glycosylation. A helical transmembrane segment spans residues 18 to 43; it reads EFRIIGIFISICCIIGVLGNLLIIIV. Residues 44-55 lie on the Cytoplasmic side of the membrane; the sequence is FAKRRSVRRPIN. Residues 56 to 81 traverse the membrane as a helical segment; the sequence is FFVLNLAVSDLIVALLGYPMTAASAF. At 82–95 the chain is on the extracellular side; the sequence is SNRWIFDNIGCKIY. C92 and C169 are disulfide-bonded. The helical transmembrane segment at 96–115 threads the bilayer; it reads AFLCFNSGVISIMTHAALSF. The Cytoplasmic segment spans residues 116–134; that stretch reads CRYIIICQYGYRKKITQTT. Residues 135 to 158 traverse the membrane as a helical segment; sequence VLRTLFSIWSFAMFWTLSPLFGWS. Residues 159 to 182 are Extracellular-facing; sequence SYVIEVVPVSCSVNWYGHGLGDVS. A helical transmembrane segment spans residues 183–210; that stretch reads YTISVIVAVYVFPLSIIVFSYGMILQEK. At 211–240 the chain is on the cytoplasmic side; that stretch reads VCKDSRKNGIRAQQRYTPRFIQDIEQRVTF. The chain crosses the membrane as a helical span at residues 241–263; the sequence is ISFLMMAAFMVAWTPYAIMSALA. Residues 264 to 271 are Extracellular-facing; it reads IGSFNVEN. Residues 272 to 295 form a helical membrane-spanning segment; that stretch reads SFAALPTLFAKASCAYNPFIYAFT. An N6-(retinylidene)lysine modification is found at K282. Residues 296-399 are Cytoplasmic-facing; sequence NANFRDTVVE…NTFTADFSVI (104 aa).

The protein belongs to the G-protein coupled receptor 1 family. Opsin subfamily. Phosphorylated on some or all of the serine and threonine residues present in the C-terminal region. As to expression, retina. Expressed in the hyperpolarizing cell layer of the photoreceptor cells with its photoreceptive region adjacent to the lens.

The protein resides in the membrane. Its function is as follows. Visual pigments are the light-absorbing molecules that mediate vision. They consist of an apoprotein, opsin, covalently linked to cis-retinal. The chain is Rhodopsin, G0-coupled (SCOP2) from Mizuhopecten yessoensis (Japanese scallop).